Here is a 306-residue protein sequence, read N- to C-terminus: Ribonuclease Z (306 aa).

Positions 63, 65, 67, 68, 141, 211, and 269 each coordinate Zn(2+). The active-site Proton acceptor is D67.

Belongs to the RNase Z family. In terms of assembly, homodimer. Requires Zn(2+) as cofactor.

The enzyme catalyses Endonucleolytic cleavage of RNA, removing extra 3' nucleotides from tRNA precursor, generating 3' termini of tRNAs. A 3'-hydroxy group is left at the tRNA terminus and a 5'-phosphoryl group is left at the trailer molecule.. In terms of biological role, zinc phosphodiesterase, which displays some tRNA 3'-processing endonuclease activity. Probably involved in tRNA maturation, by removing a 3'-trailer from precursor tRNA. In Staphylococcus aureus (strain USA300), this protein is Ribonuclease Z.